Consider the following 157-residue polypeptide: V-type proton ATPase 16 kDa proteolipid subunit c (157 aa).

Over 1 to 10 (MALPEENPVY) the chain is Lumenal. A helical transmembrane segment spans residues 11-33 (GPFFGVMGAAAAIIFSALGAAYG). Residues 34-55 (TAKSGTGIAAMSVMRPELIMKS) are Cytoplasmic-facing. Residues 56-76 (IIPVVMAGIIAIYGLVVAVLI) form a helical membrane-spanning segment. The Lumenal portion of the chain corresponds to 77 to 94 (AGSLDTPTKYSLYKGFIH). The chain crosses the membrane as a helical span at residues 95 to 116 (LGAGLAVGFSGLAAGFAIGIVG). Residues 117-128 (DAGVRGTAQQPR) are Cytoplasmic-facing. The chain crosses the membrane as a helical span at residues 129-154 (LFVGMILILIFAEVLGLYGLIVAIYL). Residues 155–157 (YTK) lie on the Lumenal side of the membrane.

It belongs to the V-ATPase proteolipid subunit family. In terms of assembly, V-ATPase is a heteromultimeric enzyme made up of two complexes: the ATP-hydrolytic V1 complex and the proton translocation V0 complex. The V1 complex consists of three catalytic AB heterodimers that form a heterohexamer, three peripheral stalks each consisting of EG heterodimers, one central rotor including subunits D and F, and the regulatory subunits C and H. The proton translocation complex V0 consists of the proton transport subunit a, a ring of proteolipid subunits c9c'', rotary subunit d, subunits e and f, and the accessory subunits VhaAC45 and ATP6AP2.

The protein resides in the membrane. In terms of biological role, proton-conducting pore forming subunit of the V0 complex of vacuolar(H+)-ATPase (V-ATPase), a multisubunit enzyme composed of a peripheral complex (V1) that hydrolyzes ATP and a membrane integral complex (V0) that translocates protons. V-ATPase is responsible for acidifying and maintaining the pH of intracellular compartments and in some cell types, is targeted to the plasma membrane, where it is responsible for acidifying the extracellular environment. This chain is V-type proton ATPase 16 kDa proteolipid subunit c, found in Aedes aegypti (Yellowfever mosquito).